The primary structure comprises 320 residues: MIFSTLEHILTHISFSVVSIVITIHFLTLFLLVDEVVGLYDSSEKGMIVTFFCITGLLVTRWIYSGHFPLSDLYESLIFLSWGFSLIHMVSYLKFKKRKNNLSAITAPSAIFTQGFATSGLLTKMHQSAILAPALQSQWLMMHVSMMVLGYAALLCGSLLSVALLVITFRKAIKIIGENNNFSFSFGKIQYMNERSNVLLNTYFLSSKNYYRYQLTQQLDRWSYRIISLGFIFLTIGILSGAVWANEAWGSYWNWDPKETWAFITWTVFAIYFHTRTNTNLEGVNSALVASMGFLIIWICYFGVNLLGIGLHSYGSFTLN.

A run of 8 helical transmembrane segments spans residues 13-33 (ISFS…FLLV), 46-66 (GMIV…IYSG), 73-93 (LYES…VSYL), 102-122 (LSAI…SGLL), 147-167 (MVLG…LLVI), 226-246 (IISL…VWAN), 259-274 (ETWA…IYFH), and 289-309 (VASM…LLGI).

This sequence belongs to the CcmF/CycK/Ccl1/NrfE/CcsA family. As to quaternary structure, may interact with Ccs1.

Its subcellular location is the plastid. It localises to the chloroplast thylakoid membrane. Functionally, required during biogenesis of c-type cytochromes (cytochrome c6 and cytochrome f) at the step of heme attachment. This is Cytochrome c biogenesis protein CcsA from Gossypium hirsutum (Upland cotton).